Reading from the N-terminus, the 250-residue chain is Isoprenyl transferase (250 aa).

Aspartate 26 is an active-site residue. Aspartate 26 serves as a coordination point for Mg(2+). Substrate contacts are provided by residues 27–30 (GNGR), tryptophan 31, arginine 39, histidine 43, and 71–73 (STE). The active-site Proton acceptor is asparagine 74. Substrate contacts are provided by residues tryptophan 75, arginine 77, arginine 198, and 204–206 (RLS). Glutamate 217 contributes to the Mg(2+) binding site.

This sequence belongs to the UPP synthase family. As to quaternary structure, homodimer. Mg(2+) serves as cofactor.

Functionally, catalyzes the condensation of isopentenyl diphosphate (IPP) with allylic pyrophosphates generating different type of terpenoids. This chain is Isoprenyl transferase, found in Streptococcus agalactiae serotype III (strain NEM316).